The sequence spans 94 residues: Small ribosomal subunit protein uS19 (94 aa).

This sequence belongs to the universal ribosomal protein uS19 family.

Functionally, protein S19 forms a complex with S13 that binds strongly to the 16S ribosomal RNA. The protein is Small ribosomal subunit protein uS19 (rpsS) of Lactobacillus acidophilus (strain ATCC 700396 / NCK56 / N2 / NCFM).